The sequence spans 117 residues: MTRIRRGYIARRRRTKIRLFTSSFRGAHSRLTRTMIQQKIKALFSAYRDRDRHKRNFRCLWVTRINAAIRENGVSYSYSTLINNLYKRQLLLNRKILAQLAILNRNCLYLISNDMIK.

Belongs to the bacterial ribosomal protein bL20 family.

Its subcellular location is the plastid. The protein localises to the chloroplast. In terms of biological role, binds directly to 23S ribosomal RNA and is necessary for the in vitro assembly process of the 50S ribosomal subunit. It is not involved in the protein synthesizing functions of that subunit. This Populus trichocarpa (Western balsam poplar) protein is Large ribosomal subunit protein bL20c.